Consider the following 161-residue polypeptide: Cyclic pyranopterin monophosphate synthase (161 aa).

Residues 75-77 and 115-116 each bind substrate; these read MCH and ME. Asp130 is an active-site residue.

This sequence belongs to the MoaC family. In terms of assembly, homohexamer; trimer of dimers.

It catalyses the reaction (8S)-3',8-cyclo-7,8-dihydroguanosine 5'-triphosphate = cyclic pyranopterin phosphate + diphosphate. It participates in cofactor biosynthesis; molybdopterin biosynthesis. In terms of biological role, catalyzes the conversion of (8S)-3',8-cyclo-7,8-dihydroguanosine 5'-triphosphate to cyclic pyranopterin monophosphate (cPMP). This Bacillus cereus (strain ATCC 10987 / NRS 248) protein is Cyclic pyranopterin monophosphate synthase.